Reading from the N-terminus, the 823-residue chain is Bifunctional enzyme flvA (823 aa).

A pyridoxal 5'-phosphate-dependent lyase region spans residues 56–535 (TAKFEMALMP…QRLYDAKFYI (480 aa)). Position 331 is an N6-(pyridoxal phosphate)lysine (Lys-331). Residues 573–823 (DFDALQQVSH…TLPMNVPLWL (251 aa)) form an alpha-ketoglutarate-dependent oxygenase region. Fe cation contacts are provided by His-703 and Asp-705.

In the N-terminal section; belongs to the trans-sulfuration enzymes family. This sequence in the C-terminal section; belongs to the iron/ascorbate-dependent oxidoreductase family. Pyridoxal 5'-phosphate serves as cofactor. It depends on Fe(2+) as a cofactor.

It carries out the reaction O-acetyl-L-homoserine + 3-methyl-2-oxobutanoate = (6S)-6-amino-3,3-dimethyl-2-oxoheptanedioate + acetate + H(+). The enzyme catalyses (6S)-3,3-dimethylpiperidine-2,6-dicarboxylate + 2-oxoglutarate + AH2 + O2 + H(+) = (2S)-5,5-dimethylpiperidine-2-carboxylate + succinate + A + 2 CO2 + H2O. It participates in secondary metabolite biosynthesis; terpenoid biosynthesis. In terms of biological role, bifunctional enzyme; part of the gene cluster that mediates the biosynthesis of flavunoidine, an alkaloidal terpenoid with a tetracyclic cage-like core connected to dimethylcadaverine via a C-N bond and acylated with 5,5-dimethyl-L-pipecolate. The tetracyclic core is synthesized by the terpene cyclase flvE and the cytochrome P450 monooxygenase flvD. The terpene cyclase flvE catalyzes the cyclization of farnesyl pyrophosphate (FPP) to form (1R,4R,5S)-(+)-acoradiene and the cytochrome P450 monooxygenase flvD is then responsible for oxidative conversion of (1R,4R,5S)-(+)-acoradiene into the tetracyclic cage present in the final product flavunoidine. In parallel, the N-methyltransferase flvH dimethylates L-lysine to give N,N-dimethyl-L-Lysin which is decarboxylated by flvG to afford dimethylcadaverine. The terpene cyclase-like protein flvF is the enzyme that attaches the dimethylcadaverine precusor at the C-7 of the tetracyclic cage to yield pre-flavunoidine. The cytochrome monooxygenase flvC hydroxylates the C-10 position of pre-flavunoidine whereas the NRPS flvI acylates the terpenoid core at the hydroxylated C-10 with dimethylpipecolate to yield final flavunoidine. The bifunctional enzyme flvA and the dehydrogenase flvB are responsible for the synthesis of the dimethylpipecolate precursor. The PLP-dependent lyase domain of flvA might use L-O-acetyl-homoserine and alpha-keto-isovalerate to form an intermediary ketone that can cyclize intramolecularly to yield an imine. The imine can be reduced by flvB to yield the 6-carboxylated pipecolate. The C-terminal alpha-KG-dependent oxygenase domain of flvA is then proposed to catalyze the decarboxylation to yield dimethylpipecolate. The polypeptide is Bifunctional enzyme flvA (Aspergillus flavus (strain ATCC 200026 / FGSC A1120 / IAM 13836 / NRRL 3357 / JCM 12722 / SRRC 167)).